Reading from the N-terminus, the 334-residue chain is uncharacterized protein (334 aa).

The Proton donor role is filled by Tyr52. Residues 314–334 (LPPPASPNSEPQVTGGCSSMC) form a disordered region. The segment covering 320–334 (PNSEPQVTGGCSSMC) has biased composition (polar residues).

Belongs to the aldo/keto reductase family.

It localises to the cytoplasm. The protein localises to the nucleus. This is an uncharacterized protein from Schizosaccharomyces pombe (strain 972 / ATCC 24843) (Fission yeast).